Consider the following 490-residue polypeptide: MELHELTLEGARALLLSGEISSKDLTTCLLDRIKTHDADLGAFITVDAAGALEAATAADERIARGEDAPLLGIPLALKDLLCTSGVRTTCASKILENFVPTYDATAVTLLKQAGAVIVGKTNLDEFGMGSSTENSAFHLTRNPWNLDHVPGGSSGGSAAAVAARMCTAALGTDTGGSIRQPASHCGVVGLKPSYGRVSRFGMVAYASSLDQIGPITRTVKDAALMMNVISGHDPKDSTSAAIDKPDFTQAFAGFDAKGLAGMKAGIPREYIGMKGLDPEVERSFKNACKVLEDLGVEVIDVSLPHTNFAVAAYYVLAPSEASANLSRYDGVKYGFRQTGCDDLMDMYKQTRSSGFGPEVKRRIIMGTYALSAGYYDEYYGRASRVRTLIMADFSKAFDQCDIILSPVAPTPAFKIGENVDDPLTMYLGDIFTLSANMAGIPGLSVPCAMSTTGLPIGLQILGRRFDEMSVLKAGYGLEQRCPGLPGLPNL.

Residues lysine 78 and serine 153 each act as charge relay system in the active site. Serine 177 acts as the Acyl-ester intermediate in catalysis.

Belongs to the amidase family. GatA subfamily. Heterotrimer of A, B and C subunits.

The enzyme catalyses L-glutamyl-tRNA(Gln) + L-glutamine + ATP + H2O = L-glutaminyl-tRNA(Gln) + L-glutamate + ADP + phosphate + H(+). Its function is as follows. Allows the formation of correctly charged Gln-tRNA(Gln) through the transamidation of misacylated Glu-tRNA(Gln) in organisms which lack glutaminyl-tRNA synthetase. The reaction takes place in the presence of glutamine and ATP through an activated gamma-phospho-Glu-tRNA(Gln). This Desulforapulum autotrophicum (strain ATCC 43914 / DSM 3382 / VKM B-1955 / HRM2) (Desulfobacterium autotrophicum) protein is Glutamyl-tRNA(Gln) amidotransferase subunit A.